Here is a 663-residue protein sequence, read N- to C-terminus: Heparan-alpha-glucosaminide N-acetyltransferase (663 aa).

Residues 1–24 are disordered; sequence MTGARASAAEQRRAGRSGQARAAE. Residues 1 to 190 are Lumenal, vesicle-facing; it reads MTGARASAAE…LAVNEDPVDS (190 aa). N94, N142, and N162 each carry an N-linked (GlcNAc...) asparagine glycan. C151 and C462 form a disulfide bridge. Residues 191-211 traverse the membrane as a helical segment; the sequence is NLPVSIAFLIGLAVIIVISFL. At 212-275 the chain is on the cytoplasmic side; it reads RLLLSLDDFN…PRLRSVDTFR (64 aa). Phosphoserine is present on residues S243 and S245. The helical transmembrane segment at 276–296 threads the bilayer; it reads GIALILMVFVNYGGGKYWYFK. H297 is a catalytic residue. Over 297-302 the chain is Lumenal, vesicle; sequence HASWNG. Residues 303 to 323 traverse the membrane as a helical segment; that stretch reads LTVADLVFPWFVFIMGSSIFL. The Cytoplasmic portion of the chain corresponds to 324–345; the sequence is SMTSILQRGCSKFRLLGKIAWR. The chain crosses the membrane as a helical span at residues 346-366; the sequence is SFLLICIGIIIVNPNYCLGPL. Over 367-374 the chain is Lumenal, vesicle; it reads SWDKVRIP. Residues 375–395 traverse the membrane as a helical segment; sequence GVLQRLGVTYFVVAVLELLFA. Topologically, residues 396–420 are cytoplasmic; the sequence is KPVPEHCASERSCLSLRDITSSWPQ. A helical membrane pass occupies residues 421-441; the sequence is WLLILVLEGLWLGLTFLLPVP. Residues 442 to 500 are Lumenal, vesicle-facing; the sequence is GCPTGYLGPGGIGDFGKYPNCTGGAAGYIDRLLLGDDHLYQHPSSAVLYHTEVAYDPEG. A helical membrane pass occupies residues 501 to 521; that stretch reads ILGTINSIVMAFLGVQAGKIL. Residues 522 to 529 are Cytoplasmic-facing; that stretch reads LYYKARTK. Residues 530–550 traverse the membrane as a helical segment; that stretch reads DILIRFTAWCCILGLISVALT. Over 551 to 564 the chain is Lumenal, vesicle; the sequence is KVSENEGFIPVNKN. The chain crosses the membrane as a helical span at residues 565–585; it reads LWSLSYVTTLSSFAFFILLVL. Residues 586–592 lie on the Cytoplasmic side of the membrane; the sequence is YPVVDVK. Residues 593-613 form a helical membrane-spanning segment; sequence GLWTGTPFFYPGMNSILVYVG. Residues 614–634 are Lumenal, vesicle-facing; it reads HEVFENYFPFQWKLKDNQSHK. Positions 624–635 are lysosomal targeting region; it reads QWKLKDNQSHKE. The helical transmembrane segment at 635 to 655 threads the bilayer; it reads EHLTQNIVATALWVLIAYILY. The Cytoplasmic portion of the chain corresponds to 656–663; it reads RKKIFWKI.

As to quaternary structure, homooligomer. Homooligomerization is necessary for enzyme activity. In terms of processing, undergoes intralysosomal proteolytic cleavage; occurs within the end of the first and/or the beginning of the second luminal domain and is essential for the activation of the enzyme. Glycosylated. In terms of tissue distribution, widely expressed, with highest level in leukocytes, heart, liver, skeletal muscle, lung, placenta and liver.

The protein resides in the lysosome membrane. The catalysed reaction is alpha-D-glucosaminyl-[heparan sulfate](n) + acetyl-CoA = N-acetyl-alpha-D-glucosaminyl-[heparan sulfate](n) + CoA + H(+). Its function is as follows. Lysosomal acetyltransferase that acetylates the non-reducing terminal alpha-glucosamine residue of intralysosomal heparin or heparan sulfate, converting it into a substrate for luminal alpha-N-acetyl glucosaminidase. The polypeptide is Heparan-alpha-glucosaminide N-acetyltransferase (HGSNAT) (Homo sapiens (Human)).